The sequence spans 683 residues: DNA ligase (683 aa).

Residues 43–47 (DAEYD), 92–93 (SL), and glutamate 125 each bind NAD(+). Catalysis depends on lysine 127, which acts as the N6-AMP-lysine intermediate. Positions 148, 185, 303, and 327 each coordinate NAD(+). Cysteine 421, cysteine 424, cysteine 439, and cysteine 445 together coordinate Zn(2+). One can recognise a BRCT domain in the interval 604 to 683 (IADNPLKGKN…QEFIALTGEN (80 aa)).

Belongs to the NAD-dependent DNA ligase family. LigA subfamily. Requires Mg(2+) as cofactor. The cofactor is Mn(2+).

The enzyme catalyses NAD(+) + (deoxyribonucleotide)n-3'-hydroxyl + 5'-phospho-(deoxyribonucleotide)m = (deoxyribonucleotide)n+m + AMP + beta-nicotinamide D-nucleotide.. DNA ligase that catalyzes the formation of phosphodiester linkages between 5'-phosphoryl and 3'-hydroxyl groups in double-stranded DNA using NAD as a coenzyme and as the energy source for the reaction. It is essential for DNA replication and repair of damaged DNA. The protein is DNA ligase of Actinobacillus pleuropneumoniae serotype 5b (strain L20).